A 506-amino-acid polypeptide reads, in one-letter code: Abscisic acid 8'-hydroxylase 2 (506 aa).

The chain crosses the membrane as a helical span at residues 3–23 (FLLFFVFVTAAVLCFVVPAFL). C437 lines the heme pocket.

It belongs to the cytochrome P450 family. Requires heme as cofactor. As to expression, in internodes and expanding leaves. Weak expression in seedlings.

Its subcellular location is the membrane. It carries out the reaction 2-cis-(+)-abscisate + reduced [NADPH--hemoprotein reductase] + O2 = (+)-8'-hydroxyabscisate + oxidized [NADPH--hemoprotein reductase] + H2O + H(+). It functions in the pathway plant hormone degradation; abscisic acid degradation. Its function is as follows. Involved in the oxidative degradation of abscisic acid. This is Abscisic acid 8'-hydroxylase 2 (CYP707A6) from Oryza sativa subsp. indica (Rice).